The primary structure comprises 147 residues: UPF0460 protein in nifX-nifW intergenic region (147 aa).

Belongs to the UPF0460 family.

This Frankia alni protein is UPF0460 protein in nifX-nifW intergenic region.